Reading from the N-terminus, the 1086-residue chain is NAD(P) transhydrogenase, mitochondrial (1086 aa).

A mitochondrion-targeting transit peptide spans 1 to 43 (MANLLKTVVTGCSCPLLSNLGSCKGLRVKKDFLRTFYTHQELW). Residues 44 to 474 (CKAPVKPGIP…TITPFRKTMS (431 aa)) are Mitochondrial matrix-facing. Position 70 is an N6-acetyllysine (K70). Residue K117 is modified to N6-succinyllysine. Residue 182-184 (RVT) participates in NAD(+) binding. K224 carries the N6-succinyllysine modification. Residues V237, 257–259 (DTR), and G287 each bind NAD(+). K294 is modified (N6-succinyllysine). Residues E300 and L319 each coordinate NAD(+). K331 is subject to N6-succinyllysine. Residue K397 is modified to N6-acetyllysine. The next 4 helical transmembrane spans lie at 475–493 (TASA…GIAA), 501–521 (MVTT…GVTP), 527–546 (LMSV…LALM), and 558–578 (GLAA…FLVT). The Mitochondrial matrix portion of the chain corresponds to 579-595 (QRMLDMFKRPTDPPEYN). Transmembrane regions (helical) follow at residues 596-616 (YLYL…LYSG), 622-642 (IMYL…STQG), 646-666 (LGNA…LGVL), 672-691 (LLAQ…LTIA), and 702-722 (LVAA…IAEY). The Cytoplasmic portion of the chain corresponds to 723 to 739 (IIEYPHFATDAAANLTK). A run of 5 helical transmembrane segments spans residues 740 to 760 (IVAY…LIAY), 778 to 797 (HLLN…PFMV), 801 to 819 (FTTG…AVMG), 833 to 853 (VVIT…GFLL), and 857 to 879 (LLTI…MCVA). Topologically, residues 880–1086 (MNRSLANVIL…QAKVRESYQK (207 aa)) are mitochondrial matrix. NADP(+)-binding positions include Y933, 965-970 (VAGRMP), 1007-1011 (GANDT), 1026-1027 (GM), 1042-1049 (KRSLGVGY), and 1068-1069 (DA). Position 1079 is an N6-succinyllysine (K1079).

It in the N-terminal section; belongs to the AlaDH/PNT family. This sequence in the C-terminal section; belongs to the PNT beta subunit family. As to quaternary structure, homodimer. As to expression, widely expressed with expression most readily detectable in adrenal, heart, kidney, thyroid and adipose tissues.

Its subcellular location is the mitochondrion inner membrane. It catalyses the reaction NAD(+) + NADPH + H(+)(in) = NADH + NADP(+) + H(+)(out). The transhydrogenation between NADH and NADP is coupled to respiration and ATP hydrolysis and functions as a proton pump across the membrane. May play a role in reactive oxygen species (ROS) detoxification in the adrenal gland. This Homo sapiens (Human) protein is NAD(P) transhydrogenase, mitochondrial (NNT).